Here is a 550-residue protein sequence, read N- to C-terminus: Hydroxylamine reductase (550 aa).

The [2Fe-2S] cluster site is built by Cys3, Cys6, Cys18, and Cys25. Residues His249, Glu273, Cys317, Cys405, Cys433, Cys458, Glu492, and Lys494 each contribute to the hybrid [4Fe-2O-2S] cluster site. A Cysteine persulfide modification is found at Cys405.

The protein belongs to the HCP family. [2Fe-2S] cluster serves as cofactor. It depends on hybrid [4Fe-2O-2S] cluster as a cofactor.

It localises to the cytoplasm. It catalyses the reaction A + NH4(+) + H2O = hydroxylamine + AH2 + H(+). Functionally, catalyzes the reduction of hydroxylamine to form NH(3) and H(2)O. This Proteus mirabilis (strain HI4320) protein is Hydroxylamine reductase.